The chain runs to 348 residues: Trace amine-associated receptor 9 (348 aa).

The Extracellular segment spans residues 1–33 (MVNNFSQAEAVELCYKNVNESCIKTPYSPGPRS). 2 N-linked (GlcNAc...) asparagine glycosylation sites follow: asparagine 4 and asparagine 19. 2 disulfide bridges follow: cysteine 22–cysteine 186 and cysteine 105–cysteine 190. A helical transmembrane segment spans residues 34-58 (ILYAVLGFGAVLAAFGNLLVMIAIL). Residues 59-68 (HFKQLHTPTN) are Cytoplasmic-facing. A helical membrane pass occupies residues 69-90 (FLIASLACADFLVGVTVMPFST). Residues 91-105 (VRSVESCWYFGDSYC) lie on the Extracellular side of the membrane. A helical transmembrane segment spans residues 106–128 (KFHTCFDTSFCFASLFHLCCISV). Residues aspartate 112 and threonine 113 each contribute to the spermidine site. Residues 129 to 148 (DRYIAVTDPLTYPTKFTVSV) are Cytoplasmic-facing. A helical transmembrane segment spans residues 149–170 (SGICIVLSWFFSVTYSFSIFYT). Residues 171-196 (GANEEGIEELVVALTCVGGCQAPLNQ) are Extracellular-facing. An extracellular Loop 2 (ECL2) region spans residues 174-187 (EEGIEELVVALTCV). A helical transmembrane segment spans residues 197 to 218 (NWVLLCFLLFFIPNVAMVFIYS). The Cytoplasmic portion of the chain corresponds to 219–256 (KIFLVAKHQARKIESTASQAQSSSESYKERVAKRERKA). Residues 257-280 (AKTLGIAMAAFLVSWLPYLVDAVI) form a helical membrane-spanning segment. At 281–293 (DAYMNFITPPYVY) the chain is on the extracellular side. A helical membrane pass occupies residues 294 to 314 (EILVWCVYYNSAMNPLIYAFF). The Cytoplasmic segment spans residues 315–348 (YQWFGKAIKLIVSGKVLRTDSSTTNLFSEEVETD).

This sequence belongs to the G-protein coupled receptor 1 family.

Its subcellular location is the cell membrane. In terms of biological role, olfactory receptor specific for trace amines, such as N,N-dimethylcyclohexylamine (DMCHA) and beta-phenylethylamine (beta-PEA). In contrast to mouse and rat orthologs, not activated by triethylamine, cadaverine (CAD) or spermidine. Trace amine compounds are enriched in animal body fluids and act on trace amine-associated receptors (TAARs) to elicit both intraspecific and interspecific innate behaviors. Trace amine-binding causes a conformation change that triggers signaling via G(s)-class of G alpha proteins (GNAL or GNAS). In mature olfactory sensory neurons, TAAR9 is coupled with GNAL/G(olf)G alpha protein and mediates activation of adenylate cyclase activity to activate cAMP signaling and eventually transmit odorant signals to achieve membrane depolarization. In immature olfactory sensory neurons, TAAR9 is coupled with GNAS/G(s) G alpha proteins. In Homo sapiens (Human), this protein is Trace amine-associated receptor 9.